Consider the following 66-residue polypeptide: Large ribosomal subunit protein bL33c (66 aa).

It belongs to the bacterial ribosomal protein bL33 family.

It localises to the plastid. Its subcellular location is the chloroplast. This Fagopyrum esculentum subsp. ancestrale (Wild buckwheat) protein is Large ribosomal subunit protein bL33c.